A 233-amino-acid chain; its full sequence is Glucosamine-6-phosphate deaminase (233 aa).

The Proton acceptor; for enolization step role is filled by aspartate 62. Catalysis depends on asparagine 128, which acts as the For ring-opening step. The active-site Proton acceptor; for ring-opening step is the histidine 130. Glutamate 135 serves as the catalytic For ring-opening step.

This sequence belongs to the glucosamine/galactosamine-6-phosphate isomerase family. NagB subfamily.

It carries out the reaction alpha-D-glucosamine 6-phosphate + H2O = beta-D-fructose 6-phosphate + NH4(+). It participates in amino-sugar metabolism; N-acetylneuraminate degradation; D-fructose 6-phosphate from N-acetylneuraminate: step 5/5. Functionally, catalyzes the reversible isomerization-deamination of glucosamine 6-phosphate (GlcN6P) to form fructose 6-phosphate (Fru6P) and ammonium ion. This is Glucosamine-6-phosphate deaminase from Streptococcus thermophilus (strain ATCC BAA-491 / LMD-9).